Here is a 291-residue protein sequence, read N- to C-terminus: Undecaprenyl-diphosphatase (291 aa).

8 helical membrane-spanning segments follow: residues 1 to 21 (MFII…LTEF), 48 to 68 (SAFT…AWVF), 102 to 122 (LHVL…DDFI), 126 to 146 (LFSV…MIIA), 162 to 182 (ISYF…WPGF), 203 to 223 (SDFT…LSLL), 231 to 251 (IADI…GLIA), and 267 to 287 (FAIY…GFGI).

Belongs to the UppP family.

The protein localises to the cell membrane. The catalysed reaction is di-trans,octa-cis-undecaprenyl diphosphate + H2O = di-trans,octa-cis-undecaprenyl phosphate + phosphate + H(+). In terms of biological role, catalyzes the dephosphorylation of undecaprenyl diphosphate (UPP). Confers resistance to bacitracin. The protein is Undecaprenyl-diphosphatase of Staphylococcus aureus (strain MRSA252).